The sequence spans 367 residues: Phosphoribosylaminoimidazole-succinocarboxamide synthase (367 aa).

This sequence belongs to the SAICAR synthetase family.

The catalysed reaction is 5-amino-1-(5-phospho-D-ribosyl)imidazole-4-carboxylate + L-aspartate + ATP = (2S)-2-[5-amino-1-(5-phospho-beta-D-ribosyl)imidazole-4-carboxamido]succinate + ADP + phosphate + 2 H(+). It participates in purine metabolism; IMP biosynthesis via de novo pathway; 5-amino-1-(5-phospho-D-ribosyl)imidazole-4-carboxamide from 5-amino-1-(5-phospho-D-ribosyl)imidazole-4-carboxylate: step 1/2. This Shewanella putrefaciens (strain CN-32 / ATCC BAA-453) protein is Phosphoribosylaminoimidazole-succinocarboxamide synthase.